Here is a 377-residue protein sequence, read N- to C-terminus: Virion membrane protein A16 (377 aa).

Glycine 2 carries N-myristoyl glycine; by host lipidation. The Virion surface portion of the chain corresponds to 2-341; the sequence is GAAVTLNRIK…VVKDKIKLPT (340 aa). Residues 342–362 form a helical; Signal-anchor for type II membrane protein membrane-spanning segment; it reads WLGAAITLVVISVIFYFISIY. Over 363–377 the chain is Intravirion; it reads SRTKIKTNDINVRRR.

Belongs to the poxviridae A16/G9/J5 family. Part of a stable entry-fusion complex (EFC) which is at least composed of proteins A16, A21, A28, G3, G9, H2, J5, and L5. Formation of the viral membrane is necessary for the assembly of the complex. Interacts with G9. In terms of processing, most cysteines are linked by disulfide bonds. They are created by the viral disulfide bond formation pathway, a poxvirus-specific redox pathway that operates on the cytoplasmic side of the MV membranes.

It localises to the virion membrane. Its function is as follows. Envelope protein part of the entry-fusion complex responsible for the virus membrane fusion with host cell membrane during virus entry. Also plays a role in cell-cell fusion (syncytium formation). This chain is Virion membrane protein A16, found in Homo sapiens (Human).